A 577-amino-acid polypeptide reads, in one-letter code: Laccase-17 (577 aa).

Residues 1–22 (MALQLLLAVFSCVLLLPQPAFG) form the signal peptide. 2 consecutive Plastocyanin-like domains span residues 30–146 (EIKM…PKRG) and 156–309 (KEVP…YEPP). N-linked (GlcNAc...) asparagine glycans are attached at residues Asn35 and Asn76. His80 and His82 together coordinate Cu cation. Asn112 is a glycosylation site (N-linked (GlcNAc...) asparagine). Cu cation-binding residues include His125 and His127. N-linked (GlcNAc...) asparagine glycosylation is found at Asn185, Asn201, Asn237, Asn297, Asn335, Asn383, Asn391, Asn401, Asn437, Asn444, Asn450, and Asn460. Residues 427 to 561 (KFPWSPIVPF…RMAWLVLDGD (135 aa)) enclose the Plastocyanin-like 3 domain. Cu cation is bound by residues His478, His481, His483, His540, Cys541, His542, and His546.

The protein belongs to the multicopper oxidase family. The cofactor is Cu cation. Ubiquitous with higher levels in the inflorescence stem.

The protein localises to the secreted. The protein resides in the extracellular space. It is found in the apoplast. The enzyme catalyses 4 hydroquinone + O2 = 4 benzosemiquinone + 2 H2O. Functionally, lignin degradation and detoxification of lignin-derived products. In Arabidopsis thaliana (Mouse-ear cress), this protein is Laccase-17 (LAC17).